The chain runs to 416 residues: CinA-like protein (416 aa).

The protein belongs to the CinA family.

In Amoebophilus asiaticus (strain 5a2), this protein is CinA-like protein.